A 195-amino-acid chain; its full sequence is ATP-dependent Clp protease proteolytic subunit (195 aa).

S98 (nucleophile) is an active-site residue. H123 is a catalytic residue.

It belongs to the peptidase S14 family. In terms of assembly, fourteen ClpP subunits assemble into 2 heptameric rings which stack back to back to give a disk-like structure with a central cavity, resembling the structure of eukaryotic proteasomes.

The protein localises to the cytoplasm. It catalyses the reaction Hydrolysis of proteins to small peptides in the presence of ATP and magnesium. alpha-casein is the usual test substrate. In the absence of ATP, only oligopeptides shorter than five residues are hydrolyzed (such as succinyl-Leu-Tyr-|-NHMec, and Leu-Tyr-Leu-|-Tyr-Trp, in which cleavage of the -Tyr-|-Leu- and -Tyr-|-Trp bonds also occurs).. Its function is as follows. Cleaves peptides in various proteins in a process that requires ATP hydrolysis. Has a chymotrypsin-like activity. Plays a major role in the degradation of misfolded proteins. The chain is ATP-dependent Clp protease proteolytic subunit from Helicobacter pylori (strain Shi470).